We begin with the raw amino-acid sequence, 86 residues long: Small ribosomal subunit protein bS20 (86 aa).

Over residues 1-27 (MANSKSAKKRATQAERRRQHNASRRSM) the composition is skewed to basic residues. The interval 1 to 28 (MANSKSAKKRATQAERRRQHNASRRSMM) is disordered.

The protein belongs to the bacterial ribosomal protein bS20 family.

Binds directly to 16S ribosomal RNA. The chain is Small ribosomal subunit protein bS20 from Aliivibrio salmonicida (strain LFI1238) (Vibrio salmonicida (strain LFI1238)).